The chain runs to 283 residues: Formamidopyrimidine-DNA glycosylase (283 aa).

Residue P2 is the Schiff-base intermediate with DNA of the active site. E3 (proton donor) is an active-site residue. K58 acts as the Proton donor; for beta-elimination activity in catalysis. Residues H100, R119, and R162 each contribute to the DNA site. The FPG-type zinc-finger motif lies at D247–R283. R273 serves as the catalytic Proton donor; for delta-elimination activity.

It belongs to the FPG family. In terms of assembly, monomer. It depends on Zn(2+) as a cofactor.

The enzyme catalyses Hydrolysis of DNA containing ring-opened 7-methylguanine residues, releasing 2,6-diamino-4-hydroxy-5-(N-methyl)formamidopyrimidine.. It catalyses the reaction 2'-deoxyribonucleotide-(2'-deoxyribose 5'-phosphate)-2'-deoxyribonucleotide-DNA = a 3'-end 2'-deoxyribonucleotide-(2,3-dehydro-2,3-deoxyribose 5'-phosphate)-DNA + a 5'-end 5'-phospho-2'-deoxyribonucleoside-DNA + H(+). Functionally, involved in base excision repair of DNA damaged by oxidation or by mutagenic agents. Acts as a DNA glycosylase that recognizes and removes damaged bases. Has a preference for oxidized purines, such as 7,8-dihydro-8-oxoguanine (8-oxoG). Has AP (apurinic/apyrimidinic) lyase activity and introduces nicks in the DNA strand. Cleaves the DNA backbone by beta-delta elimination to generate a single-strand break at the site of the removed base with both 3'- and 5'-phosphates. The chain is Formamidopyrimidine-DNA glycosylase from Roseobacter denitrificans (strain ATCC 33942 / OCh 114) (Erythrobacter sp. (strain OCh 114)).